Reading from the N-terminus, the 352-residue chain is Biotin synthase (352 aa).

The 219-residue stretch at 44-262 (NRVQVSTLLS…LAVARLLMPK (219 aa)) folds into the Radical SAM core domain. The [4Fe-4S] cluster site is built by cysteine 59, cysteine 63, and cysteine 66. [2Fe-2S] cluster is bound by residues cysteine 103, cysteine 134, cysteine 194, and arginine 266.

Belongs to the radical SAM superfamily. Biotin synthase family. As to quaternary structure, homodimer. [4Fe-4S] cluster serves as cofactor. Requires [2Fe-2S] cluster as cofactor.

It catalyses the reaction (4R,5S)-dethiobiotin + (sulfur carrier)-SH + 2 reduced [2Fe-2S]-[ferredoxin] + 2 S-adenosyl-L-methionine = (sulfur carrier)-H + biotin + 2 5'-deoxyadenosine + 2 L-methionine + 2 oxidized [2Fe-2S]-[ferredoxin]. Its pathway is cofactor biosynthesis; biotin biosynthesis; biotin from 7,8-diaminononanoate: step 2/2. Functionally, catalyzes the conversion of dethiobiotin (DTB) to biotin by the insertion of a sulfur atom into dethiobiotin via a radical-based mechanism. The chain is Biotin synthase from Pseudomonas putida (strain W619).